A 169-amino-acid chain; its full sequence is Tumor suppressor ARF (169 aa).

An interaction with CDK5RAP3 and MDM2 region spans residues 1 to 63; that stretch reads MGRRFLVTVR…RRGPHRNPGP (63 aa). The segment at 54–73 is disordered; that stretch reads RRGPHRNPGPGDDDGQRSRS.

Does not interact with cyclins, CDK1, CDK2, CDK4, CDK5 or CDK6. Interacts with COMMD1. Binds to BCL6, E2F1, HUWE1, MDM2, MYC, NPM1/B23, TOP1/TOPOI and UBE2I/UBC9. Interacts with TBRG1. Interacts with CDKN2AIP and E4F1. Interacts with CDK5RAP3 and MDM2; form a ternary complex involved in regulation of p53/TP53. Interacts with NOP53; the interaction is direct and promotes ARF nucleoplasmic relocalization and ubiquitin-mediated proteasomal degradation. Interacts with TTF1 (via the N-terminal region (NRD) and a C-terminal region); the interaction is direct and inhibits the nucleolar localization of TTF1. In terms of assembly, interacts with C1QBP. Post-translationally, ubiquitinated in normal cells by TRIP12 via the ubiquitin fusion degradation (UFD) pathway, a process that mediates ubiquitination at the N-terminus, regardless of the absence of lysine residues. Ubiquitination leads to its proteasomal degradation. In cancer cells, however, TRIP12 is located in a different cell compartment, preventing ubiquitination and degradation.

It localises to the nucleus. It is found in the nucleolus. Its subcellular location is the nucleoplasm. The protein localises to the mitochondrion. Its function is as follows. Capable of inducing cell cycle arrest in G1 and G2 phases. Acts as a tumor suppressor. Binds to MDM2 and blocks its nucleocytoplasmic shuttling by sequestering it in the nucleolus. This inhibits the oncogenic action of MDM2 by blocking MDM2-induced degradation of p53 and enhancing p53-dependent transactivation and apoptosis. Also induces G2 arrest and apoptosis in a p53-independent manner by preventing the activation of cyclin B1/CDC2 complexes. Binds to BCL6 and down-regulates BCL6-induced transcriptional repression. Binds to E2F1 and MYC and blocks their transcriptional activator activity but has no effect on MYC transcriptional repression. Binds to TOP1/TOPOI and stimulates its activity. This complex binds to rRNA gene promoters and may play a role in rRNA transcription and/or maturation. Interacts with NPM1/B23 and promotes its polyubiquitination and degradation, thus inhibiting rRNA processing. Plays a role in inhibiting ribosome biogenesis, perhaps by binding to the nucleolar localization sequence of transcription termination factor TTF1, and thereby preventing nucleolar localization of TTF1. Interacts with COMMD1 and promotes its 'Lys63'-linked polyubiquitination. Interacts with UBE2I/UBC9 and enhances sumoylation of a number of its binding partners including MDM2 and E2F1. Binds to HUWE1 and represses its ubiquitin ligase activity. May play a role in controlling cell proliferation and apoptosis during mammary gland development. May be involved in regulation of autophagy and caspase-independent cell death; the short-lived mitochondrial isoform is stabilized by C1QBP. The sequence is that of Tumor suppressor ARF from Mus musculus (Mouse).